A 332-amino-acid chain; its full sequence is Putative threonine dehydratase (332 aa).

Lysine 56 carries the N6-(pyridoxal phosphate)lysine modification.

The protein belongs to the serine/threonine dehydratase family. Pyridoxal 5'-phosphate serves as cofactor.

It carries out the reaction L-threonine = 2-oxobutanoate + NH4(+). Its pathway is amino-acid biosynthesis; L-isoleucine biosynthesis; 2-oxobutanoate from L-threonine: step 1/1. This Sinorhizobium fredii (strain NBRC 101917 / NGR234) protein is Putative threonine dehydratase.